An 894-amino-acid chain; its full sequence is Microsomal triglyceride transfer protein large subunit (894 aa).

The signal sequence occupies residues 1–21; it reads MILLAVLFLCFFSSYSASVKG. A Vitellogenin domain is found at 28–658; it reads LNNERLYKLT…IFQYIGKAEL (631 aa). An intrachain disulfide couples C174 to C194.

As to quaternary structure, interacts with PRAP1. Heterodimer; heterodimerizes with the protein disulfide isomerase (P4HB/PDI). Interacts with APOB. In terms of assembly, heterodimer; heterodimerizes with the protein disulfide isomerase (P4HB/PDI). Post-translationally, cleaved by signal peptidase between residues Gln-33 and Asn-34. As to expression, mainly expressed in the intestine and the liver, and at lower levels in white and brown fat cells. Expressed in heart. In terms of tissue distribution, ubiquitous, and is the major isoform in hematopoietic cells and adipocytes.

It is found in the endoplasmic reticulum. It localises to the golgi apparatus. The catalysed reaction is a 1,2-diacyl-sn-glycero-3-phosphocholine(in) = a 1,2-diacyl-sn-glycero-3-phosphocholine(out). It catalyses the reaction a 1,2-diacyl-sn-glycero-3-phosphoethanolamine(in) = a 1,2-diacyl-sn-glycero-3-phosphoethanolamine(out). The enzyme catalyses a cholesterol ester(in) = a cholesterol ester(out). It carries out the reaction a triacyl-sn-glycerol(in) = a triacyl-sn-glycerol(out). Functionally, catalyzes the transport of triglyceride, cholesteryl ester, and phospholipid between phospholipid surfaces. Required for the assembly and secretion of plasma lipoproteins that contain apolipoprotein B. May be involved in regulating cholesteryl ester biosynthesis in cells that produce lipoproteins. Critical for the development of natural killer T (NKT) cells. Required for the assembly and secretion of plasma lipoproteins that contain apolipoprotein B. In Mus musculus (Mouse), this protein is Microsomal triglyceride transfer protein large subunit (Mttp).